The chain runs to 433 residues: N-lysine methyltransferase SMYD2 (433 aa).

Residues Gly-7 to Ile-241 enclose the SET domain. Lys-17–Arg-19 is an S-adenosyl-L-methionine binding site. Residues Cys-52, Cys-55, Cys-65, Cys-68, Cys-74, Cys-78, His-86, and Cys-90 each coordinate Zn(2+). The segment at Cys-52–Cys-90 adopts an MYND-type zinc-finger fold. S-adenosyl-L-methionine is bound by residues His-137, Asn-206 to His-207, and Tyr-258 to Phe-260. A Phosphoserine modification is found at Ser-283.

Belongs to the class V-like SAM-binding methyltransferase superfamily. In terms of assembly, interacts with RNA polymerase II and HELZ. Interacts with SIN3A and HDAC1. Interacts (via MYND-type zinc finger) with EPB41L3. Interacts (via SET domain) with p53/TP53. Interacts with RB1 and HSP90AA1.

It is found in the cytoplasm. The protein localises to the cytosol. It localises to the nucleus. The catalysed reaction is L-lysyl(4)-[histone H3] + 3 S-adenosyl-L-methionine = N(6),N(6),N(6)-trimethyl-L-lysyl(4)-[histone H3] + 3 S-adenosyl-L-homocysteine + 3 H(+). It carries out the reaction L-lysyl-[protein] + S-adenosyl-L-methionine = N(6)-methyl-L-lysyl-[protein] + S-adenosyl-L-homocysteine + H(+). In terms of biological role, protein-lysine N-methyltransferase that methylates both histones and non-histone proteins, including p53/TP53 and RB1. Specifically trimethylates histone H3 'Lys-4' (H3K4me3) in vivo. The activity requires interaction with HSP90alpha. Shows even higher methyltransferase activity on p53/TP53. Monomethylates 'Lys-370' of p53/TP53, leading to decreased DNA-binding activity and subsequent transcriptional regulation activity of p53/TP53. Monomethylates RB1 at 'Lys-860'. The chain is N-lysine methyltransferase SMYD2 (Smyd2) from Rattus norvegicus (Rat).